A 776-amino-acid chain; its full sequence is U3 small nucleolar RNA-associated protein 4 (776 aa).

6 WD repeats span residues Arg35–Asp40, Leu132–Asp169, Glu178–Ser214, Lys230–Asp266, Thr271–Ser308, and Val417–His452.

Interacts with snoRNA U3. Interacts with MPP10. Component of the ribosomal small subunit (SSU) processome composed of at least 40 protein subunits and snoRNA U3. In the absence of snoRNA3, forms a complex with other t-UTPs. This complex can associate with pre-18S ribosomal RNAs.

The protein resides in the nucleus. It is found in the nucleolus. In terms of biological role, involved in nucleolar processing of pre-18S ribosomal RNA. Required for optimal pre-ribosomal RNA transcription by RNA polymerase I together with a subset of U3 proteins required for transcription (t-UTPs). This Saccharomyces cerevisiae (strain ATCC 204508 / S288c) (Baker's yeast) protein is U3 small nucleolar RNA-associated protein 4 (UTP4).